The following is a 342-amino-acid chain: Isopentenyl-diphosphate delta-isomerase (342 aa).

11-12 serves as a coordination point for substrate; the sequence is RK. FMN contacts are provided by residues Ser68, 69 to 71, Ser99, and Asn128; that span reads SMT. 99–101 is a binding site for substrate; the sequence is SQR. Substrate is bound at residue Gln162. Glu163 is a binding site for Mg(2+). FMN-binding positions include Lys194, Ser219, Thr224, 275–277, and 296–297; these read GVR and AK.

It belongs to the IPP isomerase type 2 family. As to quaternary structure, homooctamer. Dimer of tetramers. The cofactor is FMN. NADPH serves as cofactor. Requires Mg(2+) as cofactor.

The protein resides in the cytoplasm. The catalysed reaction is isopentenyl diphosphate = dimethylallyl diphosphate. Its function is as follows. Involved in the biosynthesis of isoprenoids. Catalyzes the 1,3-allylic rearrangement of the homoallylic substrate isopentenyl (IPP) to its allylic isomer, dimethylallyl diphosphate (DMAPP). The sequence is that of Isopentenyl-diphosphate delta-isomerase from Legionella pneumophila (strain Lens).